The sequence spans 202 residues: uncharacterized protein (202 aa).

It is found in the mitochondrion. This is an uncharacterized protein from Schizosaccharomyces pombe (strain 972 / ATCC 24843) (Fission yeast).